A 289-amino-acid chain; its full sequence is Elongation factor Ts (289 aa).

The tract at residues 82–85 is involved in Mg(2+) ion dislocation from EF-Tu; sequence TDFL.

It belongs to the EF-Ts family.

Its subcellular location is the cytoplasm. Its function is as follows. Associates with the EF-Tu.GDP complex and induces the exchange of GDP to GTP. It remains bound to the aminoacyl-tRNA.EF-Tu.GTP complex up to the GTP hydrolysis stage on the ribosome. This chain is Elongation factor Ts, found in Pseudomonas paraeruginosa (strain DSM 24068 / PA7) (Pseudomonas aeruginosa (strain PA7)).